We begin with the raw amino-acid sequence, 437 residues long: (S)-6-hydroxynicotine oxidase (437 aa).

FAD is bound by residues S16, 35-37 (EAR), R43, 57-60 (GGAG), V231, S405, and 413-415 (EYI).

It belongs to the flavin monoamine oxidase family. As to quaternary structure, homodimer. FAD is required as a cofactor.

The enzyme catalyses (S)-6-hydroxynicotine + O2 + H2O = 6-hydroxypseudooxynicotine + H2O2. The catalysed reaction is (S)-6-hydroxynicotine + O2 = 6-hydroxy-N-methylmyosmine + H2O2. The protein operates within alkaloid degradation; nicotine degradation; 6-hydroxypseudooxynicotine from nicotine (S-isomer route): step 2/2. Its activity is regulated as follows. Partially inhibited by Co(2+) or Zn(2+) and significantly inhibited by Ag(+), Cu(2+) and Hg(2+). In terms of biological role, involved in the degradation of L-nicotine. Catalyzes the oxidation of (S)-6-hydroxynicotine (6-hydroxy-L-nicotine) to 6-hydroxypseudooxynicotine. Oxidation of the pyrrolidine ring of (S)-6-hydroxynicotine leads to the formation of the optically inactive 6-hydroxy-N-methylmyosmine, which hydrolyzes spontaneously to 6-hydroxypseudooxynicotine. Acts with absolute stereospecificity on the L-form of 6-hydroxynicotine. Also involved in the degradation of nornicotine, and catalyzes the oxidation of 6-hydroxynornicotine to 6-hydroxymyosmine, which hydrolyzes to 6-hydroxypseudooxynornicotine. In vitro, converts (S)-nicotine into N-methylmyosmine, which spontaneously hydrolyzes spontaneously into pseudooxynicotine, but catalytic efficiency is about 1900-fold higher with (S)-6-hydroxynicotine. In Shinella sp. (strain HZN7), this protein is (S)-6-hydroxynicotine oxidase.